We begin with the raw amino-acid sequence, 170 residues long: Peptide deformylase-like (170 aa).

The active site involves glutamate 139.

The protein belongs to the polypeptide deformylase family.

The polypeptide is Peptide deformylase-like (Bradyrhizobium diazoefficiens (strain JCM 10833 / BCRC 13528 / IAM 13628 / NBRC 14792 / USDA 110)).